The chain runs to 426 residues: Glutamate-1-semialdehyde 2,1-aminomutase (426 aa).

Lys265 bears the N6-(pyridoxal phosphate)lysine mark.

The protein belongs to the class-III pyridoxal-phosphate-dependent aminotransferase family. HemL subfamily. In terms of assembly, homodimer. The cofactor is pyridoxal 5'-phosphate.

It localises to the cytoplasm. The enzyme catalyses (S)-4-amino-5-oxopentanoate = 5-aminolevulinate. The protein operates within porphyrin-containing compound metabolism; protoporphyrin-IX biosynthesis; 5-aminolevulinate from L-glutamyl-tRNA(Glu): step 2/2. This is Glutamate-1-semialdehyde 2,1-aminomutase from Yersinia pestis bv. Antiqua (strain Antiqua).